A 207-amino-acid chain; its full sequence is LPS-assembly lipoprotein LptE (207 aa).

Residues methionine 1–glycine 19 form the signal peptide. Cysteine 20 is lipidated: N-palmitoyl cysteine. Cysteine 20 is lipidated: S-diacylglycerol cysteine.

The protein belongs to the LptE lipoprotein family. Component of the lipopolysaccharide transport and assembly complex. Interacts with LptD.

It localises to the cell outer membrane. Functionally, together with LptD, is involved in the assembly of lipopolysaccharide (LPS) at the surface of the outer membrane. Required for the proper assembly of LptD. Binds LPS and may serve as the LPS recognition site at the outer membrane. In Yersinia enterocolitica serotype O:8 / biotype 1B (strain NCTC 13174 / 8081), this protein is LPS-assembly lipoprotein LptE.